Consider the following 197-residue polypeptide: uncharacterized protein (197 aa).

A helical membrane pass occupies residues 103-123 (LAIVLPVLANLIMCAMLAWYL).

The protein resides in the host membrane. This is an uncharacterized protein from Equus caballus (Horse).